The sequence spans 561 residues: MDSIFSVFKLFSEQFKASNIQEQATSDTKPESSPDINLGCSPNIKPECSPNIKSSIDVVEDIYPSTQLATQSLVIFSQEIKQIGSPNSPGTHDVSLNLKRKSDKISEDTDQERVVVCESLENKSSSKDKSPSRGRSPKRHKSSKKHKSSKKHKSSKHDKSSKRDKSSKRHKSHKKKDKSHKKRYRSPSSDRSLSRDRSSSRDRSYKKRRLYSRDRSLSRDRSLSRDRSLSRDRSPPRDRSLSRDRSPPRNRSFSRYRSPLRDRSPTRDRSVSRDGLTPESTPFLRSVSPVRRRFNFGKVLENHLPRENLPLTSKFGDGRIYRNKFVNNIYSVVLDDGTKIWYRGEKIIHDYNPTDNTYYIIMDDGAKIWYKGNLVHRDELPAIICANGTKKWYQYNQYDRENDLPSIVGNDGTLVWYINGKISRLNDKPAHITPNGTQKWYKDGKYHRDNDMPAIVEPYVVYKWYQYGLKHRDNDLPAIINVNGDLCWYQHDKLHREEGPAVICKNGKLIWYRHGEKIRQTTASTRGKNEYEYGDIISELYDRFPYILTWNSWNLRNQQNN.

Disordered regions lie at residues 20–42 and 82–283; these read IQEQ…GCSP and QIGS…STPF. Positions 103-131 are enriched in basic and acidic residues; it reads DKISEDTDQERVVVCESLENKSSSKDKSP. Basic residues-rich tracts occupy residues 135-156 and 165-185; these read RSPK…KSSK and KSSK…KRYR. Composition is skewed to basic and acidic residues over residues 192-203, 211-247, and 259-272; these read SLSRDRSSSRDR, YSRD…DRSP, and PLRD…RSVS.

It belongs to the mimivirus L41 family.

This is an uncharacterized protein from Acanthamoeba polyphaga (Amoeba).